A 483-amino-acid polypeptide reads, in one-letter code: Glutamyl-tRNA(Gln) amidotransferase subunit A (483 aa).

Residues K76 and S151 each act as charge relay system in the active site. S175 acts as the Acyl-ester intermediate in catalysis.

It belongs to the amidase family. GatA subfamily. As to quaternary structure, heterotrimer of A, B and C subunits.

The enzyme catalyses L-glutamyl-tRNA(Gln) + L-glutamine + ATP + H2O = L-glutaminyl-tRNA(Gln) + L-glutamate + ADP + phosphate + H(+). Its function is as follows. Allows the formation of correctly charged Gln-tRNA(Gln) through the transamidation of misacylated Glu-tRNA(Gln) in organisms which lack glutaminyl-tRNA synthetase. The reaction takes place in the presence of glutamine and ATP through an activated gamma-phospho-Glu-tRNA(Gln). The sequence is that of Glutamyl-tRNA(Gln) amidotransferase subunit A from Nitrosospira multiformis (strain ATCC 25196 / NCIMB 11849 / C 71).